The primary structure comprises 598 residues: Aspartate--tRNA(Asp/Asn) ligase (598 aa).

E182 lines the L-aspartate pocket. Residues 206–209 (QIFK) form an aspartate region. Residue R228 participates in L-aspartate binding. ATP-binding positions include 228 to 230 (RDE) and Q237. H456 is an L-aspartate binding site. Residue E490 coordinates ATP. R497 provides a ligand contact to L-aspartate. An ATP-binding site is contributed by 542–545 (GLDR).

This sequence belongs to the class-II aminoacyl-tRNA synthetase family. Type 1 subfamily. Homodimer.

It is found in the cytoplasm. The enzyme catalyses tRNA(Asx) + L-aspartate + ATP = L-aspartyl-tRNA(Asx) + AMP + diphosphate. Functionally, aspartyl-tRNA synthetase with relaxed tRNA specificity since it is able to aspartylate not only its cognate tRNA(Asp) but also tRNA(Asn). Reaction proceeds in two steps: L-aspartate is first activated by ATP to form Asp-AMP and then transferred to the acceptor end of tRNA(Asp/Asn). The chain is Aspartate--tRNA(Asp/Asn) ligase from Lachnoclostridium phytofermentans (strain ATCC 700394 / DSM 18823 / ISDg) (Clostridium phytofermentans).